Reading from the N-terminus, the 383-residue chain is L-Ala-D/L-Glu epimerase (383 aa).

Residues R68, Y94, and 198–200 (KVK) contribute to the substrate site. Mg(2+)-binding residues include D224, E251, and D276. Residues K298, 326 to 328 (CMT), and 348 to 350 (DLD) each bind substrate.

It belongs to the mandelate racemase/muconate lactonizing enzyme family. Mg(2+) serves as cofactor.

The enzyme catalyses L-alanyl-L-glutamate = L-alanyl-D-glutamate. Catalyzes the epimerization of L-Ala-D-Glu to L-Ala-L-Glu and may play a role in the metabolism of the murein peptide, of which L-Ala-D-Glu is a component. Is also able to catalyze the epimerization of L-Ala-D-Asp, L-Ala-L-Glu, L-Ala-L-Ser, L-Ala-L-Pro, L-Ala-L-L-Val, L-Ala-L-Thr, L-Ala-L-Leu, L-Ala-L-Ile and L-Gly-L-Glu (in vitro). The sequence is that of L-Ala-D/L-Glu epimerase from Bacteroides thetaiotaomicron (strain ATCC 29148 / DSM 2079 / JCM 5827 / CCUG 10774 / NCTC 10582 / VPI-5482 / E50).